We begin with the raw amino-acid sequence, 1166 residues long: Serine-aspartate repeat-containing protein E (1166 aa).

Residues Met-1–Ala-52 form the signal peptide. Positions Phe-23 to Ser-34 match the YSIRK-G/S signaling motif motif. The tract at residues Ala-53 to Lys-606 is ligand binding A region. Residues Glu-54–Glu-230 are disordered. The segment covering Ala-61–Val-75 has biased composition (basic and acidic residues). A compositionally biased stretch (low complexity) spans Glu-77–Asn-90. Residues Ile-92–Ser-108 show a composition bias toward basic and acidic residues. Residues Asn-118–Gln-129 are compositionally biased toward polar residues. Residues Asn-130–Thr-145 show a composition bias toward basic and acidic residues. A compositionally biased stretch (low complexity) spans Thr-166–Glu-178. Residues Ile-179–Thr-212 are compositionally biased toward polar residues. Residues Ser-221–Glu-230 are compositionally biased toward basic and acidic residues. CNA-B domains lie at Leu-607–Pro-719, Lys-720–Pro-829, and Lys-830–Thr-940. Positions Val-904–Asn-1141 are disordered. 2 stretches are compositionally biased toward acidic residues: residues Thr-908 to Glu-918 and Tyr-935 to Ser-1105. The LPXTG sorting signal signature appears at Leu-1129–Gly-1133. At Thr-1132 the chain carries Pentaglycyl murein peptidoglycan amidated threonine. A propeptide spans Gly-1133–Lys-1166 (removed by sortase).

This sequence belongs to the serine-aspartate repeat-containing protein (SDr) family. Interacts with host complement factor H/CFAH (via C-terminus). Interacts with host complement regulator C4BPA.

It localises to the secreted. It is found in the cell wall. In terms of biological role, cell surface-associated calcium-binding protein which plays an important role in adhesion and pathogenesis. Contributes to the resistance to killing by innate immune components in blood and thus attenuates bacterial clearance by interacting with host complement factor H/CFAH and modulating its activity. Inhibits also bacterial opsonization and killing by interacting with host complement regulator C4BPA and thus inhibiting classical complement pathway activation. In Staphylococcus aureus (strain Newman), this protein is Serine-aspartate repeat-containing protein E (sdrE).